Consider the following 207-residue polypeptide: Large ribosomal subunit protein eL13 (207 aa).

The protein belongs to the eukaryotic ribosomal protein eL13 family. As to quaternary structure, component of the 60S large ribosomal subunit (LSU).

The protein localises to the cytoplasm. Its function is as follows. Component of the ribosome, a large ribonucleoprotein complex responsible for the synthesis of proteins in the cell. The small ribosomal subunit (SSU) binds messenger RNAs (mRNAs) and translates the encoded message by selecting cognate aminoacyl-transfer RNA (tRNA) molecules. The large subunit (LSU) contains the ribosomal catalytic site termed the peptidyl transferase center (PTC), which catalyzes the formation of peptide bonds, thereby polymerizing the amino acids delivered by tRNAs into a polypeptide chain. The nascent polypeptides leave the ribosome through a tunnel in the LSU and interact with protein factors that function in enzymatic processing, targeting, and the membrane insertion of nascent chains at the exit of the ribosomal tunnel. As part of the LSU, it is probably required for its formation and the maturation of rRNAs. The sequence is that of Large ribosomal subunit protein eL13 (rpl-13) from Caenorhabditis elegans.